Reading from the N-terminus, the 618-residue chain is Mitochondrial Rho GTPase 2 (618 aa).

Over 1–592 (MRRDVRILLL…ELHPSSFWLR (592 aa)) the chain is Cytoplasmic. The Miro 1 domain maps to 2 to 168 (RRDVRILLLG…FYYAQKAVLH (167 aa)). GTP-binding residues include glycine 16, lysine 17, threonine 18, and serine 19. Threonine 18 serves as a coordination point for Mg(2+). Mg(2+) is bound by residues proline 35 and aspartate 57. Serine 59 serves as a coordination point for GTP. Lysine 96 is covalently cross-linked (Glycyl lysine isopeptide (Lys-Gly) (interchain with G-Cter in ubiquitin)). The GTP site is built by asparagine 118, lysine 119, aspartate 121, alanine 149, and lysine 150. Lysine 119 is covalently cross-linked (Glycyl lysine isopeptide (Lys-Gly) (interchain with G-Cter in ubiquitin)). A Glycyl lysine isopeptide (Lys-Gly) (interchain with G-Cter in ubiquitin) cross-link involves residue lysine 164. EF-hand domains are found at residues 184 to 219 (ACAQALTRIFRLSDQDLDQALSDEELNAFQKSCFGH) and 304 to 339 (LGYQFVQRVFEKHDQDRDGALSPVELQSLFSVFPAA). Aspartate 197, aspartate 199, aspartate 201, glutamate 208, aspartate 317, aspartate 319, aspartate 321, and glutamate 328 together coordinate Ca(2+). Residues 414–576 (RSVLLCKVVG…FTQLATMAAF (163 aa)) form the Miro 2 domain. 5 residues coordinate GTP: glycine 426, glycine 428, lysine 429, serine 430, and alanine 431. The GDP site is built by glycine 426, glycine 428, lysine 429, serine 430, and alanine 431. Serine 430 is a Mg(2+) binding site. Glutamate 471 contacts Mg(2+). Lysine 525, aspartate 527, and cysteine 556 together coordinate GTP. GDP is bound by residues lysine 525, aspartate 527, and cysteine 556. A helical; Anchor for type IV membrane protein membrane pass occupies residues 593 to 615 (GLLGVVGAAVAAVLSFSLYRVLV). Topologically, residues 616-618 (KSQ) are mitochondrial intermembrane.

It belongs to the mitochondrial Rho GTPase family. In terms of assembly, homodimer. Interacts with the kinesin-binding proteins TRAK1/OIP106 and TRAK2/GRIF1, forming a link between mitochondria and the trafficking apparatus of the microtubules. Interacts with ARMCX3. Found in a complex with KIF5B, OGT, RHOT1 and TRAK1. Ubiquitinated by PRKN in a PINK1-dependent manner, leading to its degradation. Ubiquitously expressed. Highly expressed in heart, liver, skeletal muscle, kidney and pancreas.

Its subcellular location is the mitochondrion outer membrane. It catalyses the reaction GTP + H2O = GDP + phosphate + H(+). It carries out the reaction ATP + H2O = ADP + phosphate + H(+). The catalysed reaction is UTP + H2O = UDP + phosphate + H(+). Its function is as follows. Atypical mitochondrial nucleoside-triphosphatase (NTPase) involved in mitochondrial trafficking. Probably involved in control of anterograde transport of mitochondria and their subcellular distribution. Can hydrolyze GTP. Can hydrolyze ATP and UTP. In Homo sapiens (Human), this protein is Mitochondrial Rho GTPase 2 (RHOT2).